Here is a 387-residue protein sequence, read N- to C-terminus: Succinate--CoA ligase [ADP-forming] subunit beta (387 aa).

Residues Lys46, 53-55, Glu99, Ala102, and Glu107 contribute to the ATP site; that span reads GRG. Mg(2+) is bound by residues Asn199 and Asp213. Residues Asn264 and 321–323 each bind substrate; that span reads GIV.

Belongs to the succinate/malate CoA ligase beta subunit family. Heterotetramer of two alpha and two beta subunits. Requires Mg(2+) as cofactor.

It catalyses the reaction succinate + ATP + CoA = succinyl-CoA + ADP + phosphate. It carries out the reaction GTP + succinate + CoA = succinyl-CoA + GDP + phosphate. The protein operates within carbohydrate metabolism; tricarboxylic acid cycle; succinate from succinyl-CoA (ligase route): step 1/1. In terms of biological role, succinyl-CoA synthetase functions in the citric acid cycle (TCA), coupling the hydrolysis of succinyl-CoA to the synthesis of either ATP or GTP and thus represents the only step of substrate-level phosphorylation in the TCA. The beta subunit provides nucleotide specificity of the enzyme and binds the substrate succinate, while the binding sites for coenzyme A and phosphate are found in the alpha subunit. The polypeptide is Succinate--CoA ligase [ADP-forming] subunit beta (Campylobacter jejuni subsp. jejuni serotype O:23/36 (strain 81-176)).